Consider the following 646-residue polypeptide: Pentatricopeptide repeat-containing protein At5g48910 (646 aa).

Positions 1 to 24 (MNPTQTLFSPGGNSPASSPASHPS) are disordered. Residues 9–24 (SPGGNSPASSPASHPS) show a composition bias toward low complexity. 11 PPR repeats span residues 54–88 (DTLAAAEILRFCATSDLHHRDLDYAHKIFNQMPQR), 89–126 (NCFSWNTIIRGFSESDEDKALIAITLFYEMMSDEFVEP), 127–161 (NRFTFPSVLKACAKTGKIQEGKQIHGLALKYGFGG), 162–197 (DEFVMSNLVRMYVMCGFMKDARVLFYKNIIEKDMVV), 207–237 (EIVLWNVMIDGYMRLGDCKAARMLFDKMRQR), 238–272 (SVVSWNTMISGYSLNGFFKDAVEVFREMKKGDIRP), 273–307 (NYVTLVSVLPAISRLGSLELGEWLHLYAEDSGIRI), 308–338 (DDVLGSALIDMYSKCGIIEKAIHVFERLPRE), 339–373 (NVITWSAMINGFAIHGQAGDAIDCFCKMRQAGVRP), 374–409 (SDVAYINLLTACSHGGLVEEGRRYFSQMVSVDGLEP), and 410–440 (RIEHYGCMVDLLGRSGLLDEAEEFILNMPIK). The type E motif stretch occupies residues 445–520 (IWKALLGACR…DPGCSLIDID (76 aa)). The type E(+) motif stretch occupies residues 521-551 (GVLHEFVVEDDSHPKAKEINSMLVEISDKLR). A type DYW motif region spans residues 552–646 (LAGYRPITTQ…DGSCSCMDYW (95 aa)).

This sequence belongs to the PPR family. PCMP-H subfamily.

This is Pentatricopeptide repeat-containing protein At5g48910 (PCMP-H38) from Arabidopsis thaliana (Mouse-ear cress).